Here is a 212-residue protein sequence, read N- to C-terminus: Ion-translocating oxidoreductase complex subunit G (212 aa).

Residues 9–29 (GLLLALFALLCTGLVAVVNQQ) traverse the membrane as a helical segment. Thr-176 bears the FMN phosphoryl threonine mark.

The protein belongs to the RnfG family. As to quaternary structure, the complex is composed of six subunits: RnfA, RnfB, RnfC, RnfD, RnfE and RnfG. Requires FMN as cofactor.

Its subcellular location is the cell inner membrane. Part of a membrane-bound complex that couples electron transfer with translocation of ions across the membrane. The polypeptide is Ion-translocating oxidoreductase complex subunit G (Shewanella oneidensis (strain ATCC 700550 / JCM 31522 / CIP 106686 / LMG 19005 / NCIMB 14063 / MR-1)).